Here is a 201-residue protein sequence, read N- to C-terminus: Small ribosomal subunit protein uS4c (201 aa).

The tract at residues 17-44 is disordered; sequence ALPGLTNKKPRNGSDLRNQSRSGKKSQY. In terms of domain architecture, S4 RNA-binding spans 89 to 149; it reads MRLDNILFRL…DEQKSRALIQ (61 aa).

The protein belongs to the universal ribosomal protein uS4 family. In terms of assembly, part of the 30S ribosomal subunit. Contacts protein S5. The interaction surface between S4 and S5 is involved in control of translational fidelity.

Its subcellular location is the plastid. The protein localises to the chloroplast. One of the primary rRNA binding proteins, it binds directly to 16S rRNA where it nucleates assembly of the body of the 30S subunit. Its function is as follows. With S5 and S12 plays an important role in translational accuracy. The polypeptide is Small ribosomal subunit protein uS4c (rps4) (Nicotiana sylvestris (Wood tobacco)).